Consider the following 271-residue polypeptide: Ribosomal RNA small subunit methyltransferase J (271 aa).

Residues 116–117 (RD), 132–133 (ER), 168–169 (SS), and D190 contribute to the S-adenosyl-L-methionine site.

It belongs to the methyltransferase superfamily. RsmJ family.

Its subcellular location is the cytoplasm. It catalyses the reaction guanosine(1516) in 16S rRNA + S-adenosyl-L-methionine = N(2)-methylguanosine(1516) in 16S rRNA + S-adenosyl-L-homocysteine + H(+). Functionally, specifically methylates the guanosine in position 1516 of 16S rRNA. This is Ribosomal RNA small subunit methyltransferase J from Shewanella piezotolerans (strain WP3 / JCM 13877).